The following is a 316-amino-acid chain: Lipooligosaccharide heptosyltransferase 2 (316 aa).

Belongs to the glycosyltransferase 9 family.

It carries out the reaction an L-alpha-D-Hep-(1-&gt;5)-[alpha-Kdo-(2-&gt;4)]-alpha-Kdo-(2-&gt;6)-lipid A + ADP-L-glycero-beta-D-manno-heptose = an L-alpha-D-Hep-(1-&gt;3)-L-alpha-D-Hep-(1-&gt;5)-[alpha-Kdo-(2-&gt;4)]-alpha-Kdo-(2-&gt;6)-lipid A + ADP + H(+). The protein operates within bacterial outer membrane biogenesis; LOS core biosynthesis. Functionally, glycosyltransferase involved in the biosynthesis of the core oligosaccharide region of lipooligosaccharide (LOS). Catalyzes the addition of the second heptose unit to the heptosyl-Kdo2-lipid A module. In Campylobacter jejuni subsp. jejuni serotype O:6 (strain 81116 / NCTC 11828), this protein is Lipooligosaccharide heptosyltransferase 2.